The following is a 134-amino-acid chain: Phosphomevalonate dehydratase small subunit (134 aa).

The active-site Proton acceptor is the Ser-62.

The protein belongs to the AcnX type II small subunit family. In terms of assembly, heterodimer composed of a large subunit (PMDh-L) and a small subunit (PMDh-S).

The enzyme catalyses (R)-5-phosphomevalonate = (2E)-3-methyl-5-phosphooxypent-2-enoate + H2O. Its pathway is isoprenoid biosynthesis; isopentenyl diphosphate biosynthesis via mevalonate pathway. Functionally, component of a hydro-lyase that catalyzes the dehydration of mevalonate 5-phosphate (MVA5P) to form trans-anhydromevalonate 5-phosphate (tAHMP). Involved in the archaeal mevalonate (MVA) pathway, which provides fundamental precursors for isoprenoid biosynthesis, such as isopentenyl diphosphate (IPP) and dimethylallyl diphosphate (DMAPP). The sequence is that of Phosphomevalonate dehydratase small subunit from Pyrococcus horikoshii (strain ATCC 700860 / DSM 12428 / JCM 9974 / NBRC 100139 / OT-3).